The sequence spans 174 residues: Co-chaperone protein HscB homolog (174 aa).

One can recognise a J domain in the interval 2–74 (NYFDLFNVVP…LRRAEHMLSL (73 aa)).

The protein belongs to the HscB family. As to quaternary structure, interacts with HscA and stimulates its ATPase activity.

Its function is as follows. Co-chaperone involved in the maturation of iron-sulfur cluster-containing proteins. Seems to help targeting proteins to be folded toward HscA. The sequence is that of Co-chaperone protein HscB homolog from Shewanella frigidimarina (strain NCIMB 400).